Consider the following 415-residue polypeptide: Adipocyte plasma membrane-associated protein (415 aa).

The interval 1 to 30 (MNEAEGLRQRRPLRPQVITEDSPAQEAKEG) is disordered. At 1–39 (MNEAEGLRQRRPLRPQVITEDSPAQEAKEGSAYSSKVFR) the chain is on the cytoplasmic side. A helical transmembrane segment spans residues 40–60 (VTFLTLAASLAVPLLGATVLL). Residues 61-412 (DCPIDPQPIS…RSPFICRLNL (352 aa)) lie on the Extracellular side of the membrane. Asn-159 is a glycosylation site (N-linked (GlcNAc...) asparagine).

The protein belongs to the strictosidine synthase family.

The protein localises to the membrane. This Gallus gallus (Chicken) protein is Adipocyte plasma membrane-associated protein (APMAP).